A 461-amino-acid chain; its full sequence is MSVRIEHDTFGEIEVPADKYWGAQTERSKRNFPVGKERMPIEVVYGFAQLKRAAALANFDLGKLSEAKKDAIVYACDQILSGELDEHFPLVVWQTGSGTQSNMNVNEVVSYVANMYLKDHHSDESIHPNDDVNKSQSSNDTFPTAMHVALYQEVETKLEPALKLLRNTLKEKEDKFDSIIKIGRTHLQDATPIKLGQEISGWRYMLDRCETMLSESKKHILNLAIGGTAVGTGINAHPEFGDKVAQYISENTGYPFVSSENKFHALTAHDEVVQLHGTLKALAGDLMKIANDVRWLASGPRAGLAEISIPENEPGSSIMPGKVNPTQCEMLTMVAVQVMGNDTVVGFASSQGNFELNVYKPVIMHNTLQSIYLLADGMETFNNNCAVGIEPIEENIDNYLNQSLMLVTALNPHIGYEKAAQIAKKAHKEGLTLKESAIQTGYVTEEQFEAWIKPEDMVDPH.

Residues 97–99 (SGT), 127–130 (HPND), 137–139 (SSN), and threonine 185 contribute to the substrate site. Histidine 186 (proton donor/acceptor) is an active-site residue. Serine 316 is an active-site residue. Residues serine 317 and 322-324 (KVN) each bind substrate.

It belongs to the class-II fumarase/aspartase family. Fumarase subfamily. Homotetramer.

Its subcellular location is the cytoplasm. The catalysed reaction is (S)-malate = fumarate + H2O. The protein operates within carbohydrate metabolism; tricarboxylic acid cycle; (S)-malate from fumarate: step 1/1. Its function is as follows. Involved in the TCA cycle. Catalyzes the stereospecific interconversion of fumarate to L-malate. In Staphylococcus aureus (strain MRSA252), this protein is Fumarate hydratase class II.